The chain runs to 353 residues: Methionine import ATP-binding protein MetN (353 aa).

The ABC transporter domain occupies 8–249 (LDQIDVTFHQ…PKQPLTQDFI (242 aa)). 42–49 (GYSGAGKS) contributes to the ATP binding site.

It belongs to the ABC transporter superfamily. Methionine importer (TC 3.A.1.24) family. In terms of assembly, the complex is composed of two ATP-binding proteins (MetN), two transmembrane proteins (MetI) and a solute-binding protein (MetQ).

It is found in the cell membrane. The catalysed reaction is L-methionine(out) + ATP + H2O = L-methionine(in) + ADP + phosphate + H(+). The enzyme catalyses D-methionine(out) + ATP + H2O = D-methionine(in) + ADP + phosphate + H(+). Functionally, part of the ABC transporter complex MetNIQ involved in methionine import. Responsible for energy coupling to the transport system. In Streptococcus pneumoniae (strain ATCC BAA-255 / R6), this protein is Methionine import ATP-binding protein MetN.